A 179-amino-acid polypeptide reads, in one-letter code: Large ribosomal subunit protein uL5 (179 aa).

It belongs to the universal ribosomal protein uL5 family. Part of the 50S ribosomal subunit; part of the 5S rRNA/L5/L18/L25 subcomplex. Contacts the 5S rRNA and the P site tRNA. Forms a bridge to the 30S subunit in the 70S ribosome.

Functionally, this is one of the proteins that bind and probably mediate the attachment of the 5S RNA into the large ribosomal subunit, where it forms part of the central protuberance. In the 70S ribosome it contacts protein S13 of the 30S subunit (bridge B1b), connecting the 2 subunits; this bridge is implicated in subunit movement. Contacts the P site tRNA; the 5S rRNA and some of its associated proteins might help stabilize positioning of ribosome-bound tRNAs. The protein is Large ribosomal subunit protein uL5 of Aliivibrio salmonicida (strain LFI1238) (Vibrio salmonicida (strain LFI1238)).